Reading from the N-terminus, the 336-residue chain is Glucokinase (336 aa).

12-17 contacts ATP; that stretch reads ADIGGT.

Belongs to the bacterial glucokinase family.

Its subcellular location is the cytoplasm. It catalyses the reaction D-glucose + ATP = D-glucose 6-phosphate + ADP + H(+). This chain is Glucokinase, found in Helicobacter pylori (strain J99 / ATCC 700824) (Campylobacter pylori J99).